A 292-amino-acid chain; its full sequence is Non-homologous end joining protein Ku (292 aa).

The region spanning 9–187 is the Ku domain; that stretch reads ITFGLVNVPV…TVPPITEREL (179 aa). The span at 264–285 shows a compositional bias: low complexity; that stretch reads AASAFPAAEKAPAGKNAATASA. Residues 264-292 are disordered; it reads AASAFPAAEKAPAGKNAATASAKKARKLA.

The protein belongs to the prokaryotic Ku family. Homodimer. Interacts with LigD.

In terms of biological role, with LigD forms a non-homologous end joining (NHEJ) DNA repair enzyme, which repairs dsDNA breaks with reduced fidelity. Binds linear dsDNA with 5'- and 3'- overhangs but not closed circular dsDNA nor ssDNA. Recruits and stimulates the ligase activity of LigD. The polypeptide is Non-homologous end joining protein Ku (Leifsonia xyli subsp. xyli (strain CTCB07)).